Consider the following 78-residue polypeptide: Acyl carrier protein (78 aa).

A Carrier domain is found at 2 to 77; it reads SNIEQQVKKI…LAIDYINAHN (76 aa). An O-(pantetheine 4'-phosphoryl)serine modification is found at Ser-37.

Belongs to the acyl carrier protein (ACP) family. 4'-phosphopantetheine is transferred from CoA to a specific serine of apo-ACP by AcpS. This modification is essential for activity because fatty acids are bound in thioester linkage to the sulfhydryl of the prosthetic group.

The protein localises to the cytoplasm. It participates in lipid metabolism; fatty acid biosynthesis. In terms of biological role, carrier of the growing fatty acid chain in fatty acid biosynthesis. The chain is Acyl carrier protein from Neisseria gonorrhoeae (strain ATCC 700825 / FA 1090).